A 260-amino-acid chain; its full sequence is Ribonuclease PH (260 aa).

Phosphate contacts are provided by residues Arg87 and 125–127 (GTR). Residues 232–260 (LAAPPAAGPPAPERAGAGSGSGGKGTGSR) are disordered. Over residues 248–260 (AGSGSGGKGTGSR) the composition is skewed to gly residues.

This sequence belongs to the RNase PH family. As to quaternary structure, homohexameric ring arranged as a trimer of dimers.

The catalysed reaction is tRNA(n+1) + phosphate = tRNA(n) + a ribonucleoside 5'-diphosphate. Functionally, phosphorolytic 3'-5' exoribonuclease that plays an important role in tRNA 3'-end maturation. Removes nucleotide residues following the 3'-CCA terminus of tRNAs; can also add nucleotides to the ends of RNA molecules by using nucleoside diphosphates as substrates, but this may not be physiologically important. Probably plays a role in initiation of 16S rRNA degradation (leading to ribosome degradation) during starvation. The sequence is that of Ribonuclease PH from Parafrankia sp. (strain EAN1pec).